Reading from the N-terminus, the 187-residue chain is Small ribosomal subunit protein uS5 (187 aa).

Residues 21 to 84 form the S5 DRBM domain; that stretch reads MVDKLVHINR…ESAKRDMIFV (64 aa).

The protein belongs to the universal ribosomal protein uS5 family. Part of the 30S ribosomal subunit. Contacts proteins S4 and S8.

In terms of biological role, with S4 and S12 plays an important role in translational accuracy. Its function is as follows. Located at the back of the 30S subunit body where it stabilizes the conformation of the head with respect to the body. This is Small ribosomal subunit protein uS5 from Mesorhizobium japonicum (strain LMG 29417 / CECT 9101 / MAFF 303099) (Mesorhizobium loti (strain MAFF 303099)).